The sequence spans 432 residues: Glutamyl-tRNA reductase (432 aa).

Substrate is bound by residues 49–52 (TCNR), Ser-109, 114–116 (EGQ), and Gln-120. Cys-50 serves as the catalytic Nucleophile. 198–203 (GAGRMS) is an NADP(+) binding site.

It belongs to the glutamyl-tRNA reductase family. Homodimer.

The catalysed reaction is (S)-4-amino-5-oxopentanoate + tRNA(Glu) + NADP(+) = L-glutamyl-tRNA(Glu) + NADPH + H(+). The protein operates within porphyrin-containing compound metabolism; protoporphyrin-IX biosynthesis; 5-aminolevulinate from L-glutamyl-tRNA(Glu): step 1/2. Its pathway is porphyrin-containing compound metabolism; chlorophyll biosynthesis. Its function is as follows. Catalyzes the NADPH-dependent reduction of glutamyl-tRNA(Glu) to glutamate 1-semialdehyde (GSA). The sequence is that of Glutamyl-tRNA reductase from Synechococcus sp. (strain CC9902).